A 133-amino-acid polypeptide reads, in one-letter code: Salivary cystatin-L (133 aa).

Residues 1–19 (MTSTFALVLLLGGMAVCVA) form the signal peptide. The region spanning 30 to 118 (ANHQANPEFL…RTCTTVVFEN (89 aa)) is the Cystatin domain. 2 disulfides stabilise this stretch: C89/C100 and C111/C130.

Belongs to the cystatin family. Monomer. Can form homodimers in vitro, but probably not in vivo. Homodimers are predicted to be inactive; dimerization disrupts the interaction with target proteases. As to expression, detected in saliva (at protein level). Detected in salivary gland and midgut.

The protein localises to the secreted. In terms of biological role, contributes to the suppression of the host's immune response to tick salivary proteins and is important for successful feeding on hosts. Inhibitor of cysteine proteinases. Inhibits host papain and cathepsin L (CTSL) (in vitro). Inhibits host cathepsin S (CTSS) (in vitro). Inhibits host CTSV and CTSC, but to a lesser degree (in vitro). Inhibits host immune responses via its inhibition of host cathepsins. Inhibits differentiation of host dendritic cells. Inhibits proliferation of host T-cells in response to antigen stimulus. Down-regulates IL1B production by host mast cells, and this then leads to impaired activation of IL1R1, resulting in decreased IL9 production. Inhibits host inflammatory reactions and recruitment of host neutrophils. Attenuates IFN-beta (IFNB1)-triggered JAK/STAT signaling pathway in mouse dendritic cells. (Microbial infection) Down-regulates TLR2-mediated host responses to infection by Borrelia burgdorferi and the production of the chemokine CCL3 by host dendritic cells. Down-regulates host responses to infection by B.burgdorferi and the production of IFNB1 by host dendritic cells. This is Salivary cystatin-L from Ixodes scapularis (Black-legged tick).